Here is a 335-residue protein sequence, read N- to C-terminus: Probable calcium-binding protein CML49 (335 aa).

Over residues 1–10 (MSGYPPSSQG) the composition is skewed to low complexity. Positions 1–154 (MSGYPPSSQG…PQASYGSPFA (154 aa)) are disordered. Over residues 30-45 (NPPPYGSSGSNPPPPY) the composition is skewed to pro residues. Low complexity predominate over residues 46 to 63 (GSSASSPYAVPYGAQPAP). Positions 110 to 141 (DYGGYGGAPQQSGHGGGYGGAPQQSGHGGGYG) are enriched in gly residues. EF-hand domains lie at 164-199 (GTDP…YNQS) and 230-265 (FSLQ…LGFS). Positions 177, 179, 181, 188, 243, 245, 247, 249, and 254 each coordinate Ca(2+).

Functionally, potential calcium sensor. The sequence is that of Probable calcium-binding protein CML49 (CML49) from Arabidopsis thaliana (Mouse-ear cress).